We begin with the raw amino-acid sequence, 353 residues long: Inactive metacaspase-4 (353 aa).

Gly2 carries N-myristoyl glycine lipidation.

This sequence belongs to the peptidase C14B family. Palmitoylated. In terms of processing, proteolytic cleavage by MCA3 occurs prior or during secretion and requires MCA4 membrane localization. Cleavage is dispensable for secretion and parasite growth and virulence in the mammalian host. In vitro, can be cleaved by MCA2 but specifically cleaved by MCA3 in vivo.

The protein resides in the cell projection. It is found in the cilium. Its subcellular location is the flagellum membrane. It localises to the secreted. Its function is as follows. Inactive metacaspase which plays a role in parasite bloodstream form growth and in parasite virulence within the mammalian host. The polypeptide is Inactive metacaspase-4 (Trypanosoma brucei brucei).